Reading from the N-terminus, the 1437-residue chain is DNA polymerase III PolC-type (1437 aa).

The Exonuclease domain occupies 420-576 (YVIFDVETTG…YDSETTGHLC (157 aa)).

It belongs to the DNA polymerase type-C family. PolC subfamily.

It is found in the cytoplasm. It carries out the reaction DNA(n) + a 2'-deoxyribonucleoside 5'-triphosphate = DNA(n+1) + diphosphate. Required for replicative DNA synthesis. This DNA polymerase also exhibits 3' to 5' exonuclease activity. This Pediococcus pentosaceus (strain ATCC 25745 / CCUG 21536 / LMG 10740 / 183-1w) protein is DNA polymerase III PolC-type.